The chain runs to 192 residues: Adenylate kinase (192 aa).

Gly10–Thr15 is an ATP binding site. The interval Ser30–Val59 is NMP. AMP-binding positions include Thr31, Arg36, Ala57–Val59, Gly85–Arg88, and Gln92. Residues Lys126–Asp142 form an LID region. ATP is bound at residue Arg127. Residues Arg139 and Arg150 each coordinate AMP. Met178 contacts ATP.

It belongs to the adenylate kinase family. As to quaternary structure, monomer.

It is found in the cytoplasm. The catalysed reaction is AMP + ATP = 2 ADP. It functions in the pathway purine metabolism; AMP biosynthesis via salvage pathway; AMP from ADP: step 1/1. Functionally, catalyzes the reversible transfer of the terminal phosphate group between ATP and AMP. Plays an important role in cellular energy homeostasis and in adenine nucleotide metabolism. The sequence is that of Adenylate kinase from Bartonella quintana (strain Toulouse) (Rochalimaea quintana).